The chain runs to 145 residues: Protein SprT-like (145 aa).

The SprT-like domain maps to 4–141 (TDYVKEVSRQ…CGNCHGKLRH (138 aa)). A Zn(2+)-binding site is contributed by histidine 64. Glutamate 65 is an active-site residue. Residue histidine 68 coordinates Zn(2+).

Belongs to the SprT family. Zn(2+) serves as cofactor.

The protein resides in the cytoplasm. This is Protein SprT-like from Streptococcus mutans serotype c (strain ATCC 700610 / UA159).